We begin with the raw amino-acid sequence, 234 residues long: 2-C-methyl-D-erythritol 4-phosphate cytidylyltransferase (234 aa).

The protein belongs to the IspD/TarI cytidylyltransferase family. IspD subfamily.

It carries out the reaction 2-C-methyl-D-erythritol 4-phosphate + CTP + H(+) = 4-CDP-2-C-methyl-D-erythritol + diphosphate. It functions in the pathway isoprenoid biosynthesis; isopentenyl diphosphate biosynthesis via DXP pathway; isopentenyl diphosphate from 1-deoxy-D-xylulose 5-phosphate: step 2/6. Its function is as follows. Catalyzes the formation of 4-diphosphocytidyl-2-C-methyl-D-erythritol from CTP and 2-C-methyl-D-erythritol 4-phosphate (MEP). In Pseudomonas paraeruginosa (strain DSM 24068 / PA7) (Pseudomonas aeruginosa (strain PA7)), this protein is 2-C-methyl-D-erythritol 4-phosphate cytidylyltransferase.